The chain runs to 413 residues: L-methionine gamma-lyase (413 aa).

Pyridoxal 5'-phosphate-binding positions include 75-77 (YGR) and 105-106 (GM). Tyr-131 is a substrate binding site. A pyridoxal 5'-phosphate-binding site is contributed by 218–220 (SAT). Lys-221 is modified (N6-(pyridoxal phosphate)lysine). Residue Arg-365 participates in substrate binding. Residues 388 to 413 (RLPETAGAGREPSRTALRLPERAADR) are disordered.

Belongs to the trans-sulfuration enzymes family. In terms of assembly, homotetramer; dimer of active dimers. Pyridoxal 5'-phosphate is required as a cofactor.

The enzyme catalyses L-methionine + H2O = methanethiol + 2-oxobutanoate + NH4(+). It catalyses the reaction L-homocysteine + H2O = 2-oxobutanoate + hydrogen sulfide + NH4(+) + H(+). The catalysed reaction is L-cysteine + H2O = hydrogen sulfide + pyruvate + NH4(+) + H(+). Its function is as follows. Catalyzes the alpha,gamma-elimination of L-methionine to produce methanethiol, 2-oxobutanoate and ammonia. Is probably involved in L-methionine catabolism. Is also able to catalyze the alpha,gamma-elimination of L-homocysteine, and, to a lesser extent, the alpha,beta-elimination of L-cysteine. The sequence is that of L-methionine gamma-lyase from Streptomyces avermitilis (strain ATCC 31267 / DSM 46492 / JCM 5070 / NBRC 14893 / NCIMB 12804 / NRRL 8165 / MA-4680).